A 393-amino-acid chain; its full sequence is MMGGKSSKSKKNVEFGSPSTPVQIKINSEYTEHLSSYERACSEDPKLESFDSALHERTNRVINKLASGVEIKSLSFDSLREVTQCLLDMNQDVVKVILQDKEDIWNNQDLFSLVNLYFESTAKTMDFCSELENCLNRARRSQVIIQFAVNQFEEENEDKENRKYEKTLEELKRFKVAGEPFTKEFFALFDLVYKQQVMMLEELHKLKRKLDKRLRNIKTWRRVSNMVFVTAFVSVLIFSVVAAAVAAPPVVAAIAGALAVPVGSVGKWCNTLWTKYEKVVRGQKEIITSIRIGTYISVKEMDNISILVRKVEVEIESLLKKAEFAITEEKEVRLAIDEIKKKLDVFTETIEELGEHAGKYCSDVTKARTVILQRIIRYPAGSPKDEAPWTEMM.

The disordered stretch occupies residues 1–20 (MMGGKSSKSKKNVEFGSPST). Residues 149-222 (VNQFEEENED…RLRNIKTWRR (74 aa)) adopt a coiled-coil conformation. 2 helical membrane-spanning segments follow: residues 226-246 (MVFV…AAVA) and 249-269 (PVVA…GKWC). Positions 299 to 356 (KEMDNISILVRKVEVEIESLLKKAEFAITEEKEVRLAIDEIKKKLDVFTETIEELGEH) form a coiled coil.

Belongs to the UPF0496 family.

The protein localises to the membrane. The polypeptide is UPF0496 protein At2g18630 (Arabidopsis thaliana (Mouse-ear cress)).